Here is a 51-residue protein sequence, read N- to C-terminus: Protein 1.4 (51 aa).

The signal sequence occupies residues 1–23 (MFKKVGKFLAALAAILTLAYILA). The chain crosses the membrane as a helical span at residues 28–48 (VALVVVGACYLAAVCACVWSI).

It localises to the host membrane. This is Protein 1.4 from Escherichia coli (Bacteriophage T7).